We begin with the raw amino-acid sequence, 185 residues long: Threonylcarbamoyl-AMP synthase (185 aa).

Positions 5–185 (ADRIADAVAA…DLQSGETLRR (181 aa)) constitute a YrdC-like domain.

The protein belongs to the SUA5 family. TsaC subfamily.

It localises to the cytoplasm. It catalyses the reaction L-threonine + hydrogencarbonate + ATP = L-threonylcarbamoyladenylate + diphosphate + H2O. Its function is as follows. Required for the formation of a threonylcarbamoyl group on adenosine at position 37 (t(6)A37) in tRNAs that read codons beginning with adenine. Catalyzes the conversion of L-threonine, HCO(3)(-)/CO(2) and ATP to give threonylcarbamoyl-AMP (TC-AMP) as the acyladenylate intermediate, with the release of diphosphate. The polypeptide is Threonylcarbamoyl-AMP synthase (Chromohalobacter salexigens (strain ATCC BAA-138 / DSM 3043 / CIP 106854 / NCIMB 13768 / 1H11)).